Here is a 74-residue protein sequence, read N- to C-terminus: Small ribosomal subunit protein uS15 (74 aa).

This sequence belongs to the universal ribosomal protein uS15 family. Part of the 30S ribosomal subunit. Forms a bridge to the 50S subunit in the 70S ribosome, contacting the 23S rRNA.

Its function is as follows. One of the primary rRNA binding proteins, it binds directly to 16S rRNA where it helps nucleate assembly of the platform of the 30S subunit by binding and bridging several RNA helices of the 16S rRNA. Forms an intersubunit bridge (bridge B4) with the 23S rRNA of the 50S subunit in the ribosome. The polypeptide is Small ribosomal subunit protein uS15 (Aster yellows witches'-broom phytoplasma (strain AYWB)).